The sequence spans 394 residues: Cysteine protease ATG4B (394 aa).

Cys74 functions as the Nucleophile in the catalytic mechanism. Catalysis depends on residues Asp280 and His282. Residues 389 to 392 (FEIL) carry the LIR motif.

The protein belongs to the peptidase C54 family.

The protein resides in the cytoplasm. It localises to the cytosol. The protein localises to the cytoplasmic vesicle. Its subcellular location is the autophagosome. It is found in the endoplasmic reticulum. The protein resides in the mitochondrion. It catalyses the reaction [protein]-C-terminal L-amino acid-glycyl-phosphatidylethanolamide + H2O = [protein]-C-terminal L-amino acid-glycine + a 1,2-diacyl-sn-glycero-3-phosphoethanolamine. The enzyme catalyses [protein]-C-terminal L-amino acid-glycyl-phosphatidylserine + H2O = [protein]-C-terminal L-amino acid-glycine + a 1,2-diacyl-sn-glycero-3-phospho-L-serine. Functionally, cysteine protease that plays a key role in autophagy by mediating both proteolytic activation and delipidation of ATG8 family proteins. Required for canonical autophagy (macroautophagy), non-canonical autophagy as well as for mitophagy. The protease activity is required for proteolytic activation of ATG8 family proteins: cleaves the C-terminal amino acid of ATG8 proteins to reveal a C-terminal glycine. Exposure of the glycine at the C-terminus is essential for ATG8 proteins conjugation to phosphatidylethanolamine (PE) and insertion to membranes, which is necessary for autophagy. Protease activity is also required to counteract formation of high-molecular weight conjugates of ATG8 proteins (ATG8ylation): acts as a deubiquitinating-like enzyme that removes ATG8 conjugated to other proteins, such as ATG3. In addition to the protease activity, also mediates delipidation of ATG8 family proteins. Catalyzes delipidation of PE-conjugated forms of ATG8 proteins during macroautophagy. Also involved in non-canonical autophagy, a parallel pathway involving conjugation of ATG8 proteins to single membranes at endolysosomal compartments, by catalyzing delipidation of ATG8 proteins conjugated to phosphatidylserine (PS). This chain is Cysteine protease ATG4B, found in Danio rerio (Zebrafish).